Consider the following 313-residue polypeptide: Recombination-promoting nuclease pSLT051 (313 aa).

The protein belongs to the Rpn/YhgA-like nuclease family.

A low activity DNA endonuclease probably yielding 3'-hydroxyl ends. Involved in RecA-independent recombination and horizontal gene transfer. This is Recombination-promoting nuclease pSLT051 from Salmonella typhimurium (strain LT2 / SGSC1412 / ATCC 700720).